The following is a 69-amino-acid chain: Antimicrobial peptide Meucin-18 (69 aa).

Positions 1–16 (MVIFLAYFLVVNESEA) are cleaved as a signal peptide. Positions 38 to 69 (ERSVMNRDLENLFDPYQRNLEMDRLLKQLRNY) are excised as a propeptide.

It belongs to the non-disulfide-bridged peptide (NDBP) superfamily. Medium-length antimicrobial peptide (group 3) family. As to expression, expressed by the venom gland.

It localises to the secreted. It is found in the target cell membrane. In terms of biological role, amphipathic peptide that exhibits extensive cytolytic activities against both prokaryotic and eukaryotic cells. Acts by fastly disrupting the bacterial membrane. Is more potent against Gram-positive bacteria than against Gram-negative bacteria, and fungi (LC=25.1-8.3 uM). Shows potent activity against penicillin (MIC=3.0 uM) and methicillin (MIC=1.5-3.0 uM) resistant bacteria. Is lethal to the fungus Beauveria sp (LC=1.9 uM), a highly lethal pathogenic fungus to insects and resistant to many AMPs. Shows hemolytic activity against rabbit erythrocytes (37.7% of inhibition at 6.25 uM) and cytolysis against rat dorsal root ganglions. May act by disrupting the integrity of the bacterial cell membrane. Antibiotic activity is not affected by major negatively charged components of the prokaryotic cell wall (e.g. lipopolysaccharides and lipoteichoic acid). In vivo, intravenous injection into mice tail provokes uncomfortable symptoms with a death rate of 12.5%. In vivo, in a mouse model of lethal peritonitis, shows potent antibiotic activity without cytotoxicity, improving the survival rate. This Mesobuthus eupeus (Lesser Asian scorpion) protein is Antimicrobial peptide Meucin-18.